We begin with the raw amino-acid sequence, 375 residues long: Cytochrome P450 monooxygenase ACRTS1 (375 aa).

Cysteine 321 is a binding site for heme.

The protein belongs to the cytochrome P450 family. Requires heme as cofactor.

Its pathway is mycotoxin biosynthesis. In terms of biological role, cytochrome P450 monooxygenase; part of the gene cluster that mediates the biosynthesis of the host-selective toxins (HSTs) ACR-toxins responsible for brown spot of rough lemon disease by the rough lemon pathotype. ACR-toxins cause uncoupling of mitochondrial oxidative-phosphorylation similar to that of classic protonophore. The structure of the major form of ACR-toxin (ACR-toxin I) consists of an alpha-dihydropyrone ring in a 19-carbon polyalcohol, a typical polyketide structure. Minor toxins were characterized as having a pyrone ring with polyalcohol side chains different in length and showing weaker toxicity. The highly reducing polyketide synthase ACRTS2 has all necessary enzymatic domains for multiple cycles of condensation and beta-keto processing. The cytochrome P450 monooxygenase ACRTS1 has also been shown to be essential for ACR-toxin biosynthesis, however its exact role in the pathway has not been elucidated yet. In Alternaria alternata (Alternaria rot fungus), this protein is Cytochrome P450 monooxygenase ACRTS1.